The sequence spans 190 residues: Protein GrpE (190 aa).

Over residues 1-26 (MADKEKDAVIVDETEHVDVDSKESKK) the composition is skewed to basic and acidic residues. Residues 1–31 (MADKEKDAVIVDETEHVDVDSKESKKEKKTK) form a disordered region.

It belongs to the GrpE family. In terms of assembly, homodimer.

It localises to the cytoplasm. Participates actively in the response to hyperosmotic and heat shock by preventing the aggregation of stress-denatured proteins, in association with DnaK and GrpE. It is the nucleotide exchange factor for DnaK and may function as a thermosensor. Unfolded proteins bind initially to DnaJ; upon interaction with the DnaJ-bound protein, DnaK hydrolyzes its bound ATP, resulting in the formation of a stable complex. GrpE releases ADP from DnaK; ATP binding to DnaK triggers the release of the substrate protein, thus completing the reaction cycle. Several rounds of ATP-dependent interactions between DnaJ, DnaK and GrpE are required for fully efficient folding. This is Protein GrpE from Acholeplasma laidlawii (strain PG-8A).